We begin with the raw amino-acid sequence, 390 residues long: Manganese peroxidase 2 (390 aa).

Positions 1 to 23 (MAFNFAAILAFVSLAAVTSAAPS) are cleaved as a signal peptide. Cystine bridges form between cysteine 27-cysteine 39, cysteine 38-cysteine 313, cysteine 57-cysteine 141, cysteine 277-cysteine 343, and cysteine 365-cysteine 372. Glutamate 59 and glutamate 63 together coordinate Mn(2+). Residue histidine 70 is the Proton acceptor of the active site. 4 residues coordinate Ca(2+): aspartate 71, glycine 86, aspartate 88, and serine 90. A glycan (N-linked (GlcNAc...) asparagine) is linked at asparagine 155. Residue histidine 197 participates in heme b binding. Serine 198 is a binding site for Ca(2+). Residue aspartate 203 participates in Mn(2+) binding. Ca(2+) is bound by residues aspartate 215, threonine 217, and aspartate 222. Asparagine 241 carries N-linked (GlcNAc...) asparagine glycosylation.

The protein belongs to the peroxidase family. Ligninase subfamily. It depends on heme b as a cofactor. The cofactor is Ca(2+).

Its subcellular location is the secreted. The catalysed reaction is 2 Mn(2+) + H2O2 + 2 H(+) = 2 Mn(3+) + 2 H2O. Catalyzes the oxidation of Mn(2+) to Mn(3+). The latter, acting as a diffusible redox mediator, is capable of oxidizing a variety of lignin compounds. The polypeptide is Manganese peroxidase 2 (mnp2) (Phlebia radiata (White-rot fungus)).